A 2566-amino-acid chain; its full sequence is Highly reducing polyketide synthase verA (2566 aa).

A Ketosynthase family 3 (KS3) domain is found at P3–S440. The interval V35–N61 is disordered. Basic and acidic residues predominate over residues F44 to P54. Active-site for beta-ketoacyl synthase activity residues include C176, H316, and H360. Residues I554–G880 form a malonyl-CoA:ACP transacylase (MAT) domain region. Residue S648 is the For malonyltransferase activity of the active site. The N-terminal hotdog fold stretch occupies residues H950–P1081. The tract at residues H950–P1246 is dehydratase (DH) domain. The 301-residue stretch at H950 to Q1250 folds into the PKS/mFAS DH domain. H982 acts as the Proton acceptor; for dehydratase activity in catalysis. The segment at A1096–Q1250 is C-terminal hotdog fold. The Proton donor; for dehydratase activity role is filled by D1156. The segment at D1386–T1581 is methyltransferase (CMet) domain. The tract at residues K2127–I2294 is ketoreductase (KR) domain. A Carrier domain is found at E2411–L2489. S2449 carries the post-translational modification O-(pantetheine 4'-phosphoryl)serine. A disordered region spans residues K2505 to F2540. The span at S2518–S2527 shows a compositional bias: low complexity.

Pantetheine 4'-phosphate is required as a cofactor.

It functions in the pathway secondary metabolite biosynthesis; terpenoid biosynthesis. The protein operates within mycotoxin biosynthesis. Highly reducing polyketide synthase (HR-PKS); part of the gene cluster that mediates the biosynthesis of the neurotoxin verrucosidin, a methylated alpha-pyrone polyketide that inhibits oxidative phosphorylation in mitochondria and thereby causes neurological diseases. The carbon backbone of verrucosidin is synthesized by the HR-PKS verA, and further modified by the other verrucodidin cluster enzymes. This is Highly reducing polyketide synthase verA from Penicillium polonicum.